We begin with the raw amino-acid sequence, 253 residues long: MMTEPILQIRDLSVYYNQKKTLKDVSLDLYPNEITALIGPSGSGKSTLLRSINRMNDLNPEVTITGSIVYNGHNIYSPRTDTVDLRKEIGMVFQQPNPFPMSIYENVVYGLRLKGIRDKSILDHAVESSLKGASIWNEVKDRLHDSAVGLSGGQQQRVCIARVLATSPRIILLDEPTSALDPISAGKIEETLLLLKKDYTLAIVTRSMQQASRLSDRTGFFLEGDLLECGPTKAMFMNPKRKETEDYISGKFG.

In terms of domain architecture, ABC transporter spans 7-248 (LQIRDLSVYY…PKRKETEDYI (242 aa)). Residue 39-46 (GPSGSGKS) coordinates ATP.

The protein belongs to the ABC transporter superfamily. Phosphate importer (TC 3.A.1.7) family. The complex is composed of two ATP-binding proteins (PstB), two transmembrane proteins (PstC and PstA) and a solute-binding protein (PstS).

Its subcellular location is the cell membrane. It catalyses the reaction phosphate(out) + ATP + H2O = ADP + 2 phosphate(in) + H(+). In terms of biological role, part of the ABC transporter complex PstSACB involved in phosphate import. Responsible for energy coupling to the transport system. The chain is Phosphate import ATP-binding protein PstB 1 from Streptococcus pyogenes serotype M2 (strain MGAS10270).